A 503-amino-acid chain; its full sequence is Probable zinc metalloprotease UREG_01421 (503 aa).

The signal sequence occupies residues 1–24; that stretch reads MHSLSSALAGSTFVLLFLCLLASA. N-linked (GlcNAc...) asparagine glycosylation occurs at N105. Residues H176, D196, and E232 each contribute to the Zn(2+) site. Residue N247 is glycosylated (N-linked (GlcNAc...) asparagine). D259 is a binding site for Zn(2+). The Fibronectin type-III domain occupies 416 to 503; that stretch reads MPRNVRVSTR…RGVAVLPFPA (88 aa). A glycan (N-linked (GlcNAc...) asparagine) is linked at N429.

Belongs to the peptidase M28 family. M28B subfamily. Zn(2+) is required as a cofactor.

The protein localises to the secreted. In Uncinocarpus reesii (strain UAMH 1704), this protein is Probable zinc metalloprotease UREG_01421.